Reading from the N-terminus, the 775-residue chain is Glutamine--tRNA ligase (775 aa).

A2 is modified (N-acetylalanine). Residue S70 is modified to Phosphoserine. Residues 271–273 and 277–283 each bind ATP; these read EPN and HIGHAKA. D303 provides a ligand contact to L-glutamine. Position 309 is an N6-acetyllysine (K309). Position 438 (Y438) interacts with L-glutamine. ATP-binding positions include T457, 486-487, and 494-496; these read RL and VSK. A Phosphoserine modification is found at S495.

Belongs to the class-I aminoacyl-tRNA synthetase family. As to quaternary structure, monomer. Part of a multisubunit complex that groups tRNA ligases for Arg (RARS1), Asp (DARS1), Gln (QARS1), Ile (IARS1), Leu (LARS1), Lys (KARS1), Met (MARS1) the bifunctional ligase for Glu and Pro (EPRS1) and the auxiliary subunits AIMP1/p43, AIMP2/p38 and EEF1E1/p18. Interacts with RARS1. Part of a complex composed of RARS1, QARS1 and AIMP1.

The protein resides in the cytoplasm. It localises to the cytosol. It carries out the reaction tRNA(Gln) + L-glutamine + ATP = L-glutaminyl-tRNA(Gln) + AMP + diphosphate. Functionally, glutamine--tRNA ligase. Plays a critical role in brain development. This chain is Glutamine--tRNA ligase (Qars1), found in Mus musculus (Mouse).